The primary structure comprises 74 residues: Putative defensin-like protein 36 (74 aa).

The signal sequence occupies residues 1–22; the sequence is MASNKVSFFLVLCLCILLAGEC. 3 disulfides stabilise this stretch: C33/C59, C45/C69, and C49/C71.

It belongs to the DEFL family.

It localises to the secreted. The sequence is that of Putative defensin-like protein 36 from Arabidopsis thaliana (Mouse-ear cress).